We begin with the raw amino-acid sequence, 212 residues long: Imidazole glycerol phosphate synthase subunit HisH (212 aa).

Residues 2–212 (KVAVIDYGMG…KNFLAWDGNV (211 aa)) form the Glutamine amidotransferase type-1 domain. The active-site Nucleophile is cysteine 82. Active-site residues include histidine 190 and glutamate 192.

As to quaternary structure, heterodimer of HisH and HisF.

Its subcellular location is the cytoplasm. It catalyses the reaction 5-[(5-phospho-1-deoxy-D-ribulos-1-ylimino)methylamino]-1-(5-phospho-beta-D-ribosyl)imidazole-4-carboxamide + L-glutamine = D-erythro-1-(imidazol-4-yl)glycerol 3-phosphate + 5-amino-1-(5-phospho-beta-D-ribosyl)imidazole-4-carboxamide + L-glutamate + H(+). It carries out the reaction L-glutamine + H2O = L-glutamate + NH4(+). It functions in the pathway amino-acid biosynthesis; L-histidine biosynthesis; L-histidine from 5-phospho-alpha-D-ribose 1-diphosphate: step 5/9. In terms of biological role, IGPS catalyzes the conversion of PRFAR and glutamine to IGP, AICAR and glutamate. The HisH subunit catalyzes the hydrolysis of glutamine to glutamate and ammonia as part of the synthesis of IGP and AICAR. The resulting ammonia molecule is channeled to the active site of HisF. This is Imidazole glycerol phosphate synthase subunit HisH from Chromobacterium violaceum (strain ATCC 12472 / DSM 30191 / JCM 1249 / CCUG 213 / NBRC 12614 / NCIMB 9131 / NCTC 9757 / MK).